Consider the following 398-residue polypeptide: MAAAVTVEEVRRAQRAEGPATVLAIGTATPANCVYQADYPDYYFRITKSEHMVELKEKFKRMCDKSQIRKRYMHLTEEILQENPNMCAYMAPSLDARQDIVVVEVPKLGKAAAQKAIKEWGQPRSRITHLVFCTTSGVDMPGADYQLAKMLGLRPNVSRLMMYQQGCFAGGTVLRVAKDLAENNRGARVLAVCSEITAVTFRGPSESHLDSMVGQALFGDGAAAVIVGSDPDEAVERPLFQMVSASQTILPDSEGAIDGHLREVGLTFHLLKDVPGLISKNIERALGDAFTPLGISDWNSIFWVAHPGGPAILDQVEAKVGLDKERMRATRHVLSEYGNMSSACVLFILDEMRKRSAEDGHATTGEGMDWGVLFGFGPGLTVETVVLHSVPITAGAAA.

CoA is bound at residue 58 to 65 (KFKRMCDK). C167 serves as the catalytic Acyl-thioester intermediate. Substrate-binding positions include T200 and 219–220 (GD). CoA is bound at residue A311.

It belongs to the thiolase-like superfamily. Chalcone/stilbene synthases family. Homodimer.

The enzyme catalyses (E)-4-coumaroyl-CoA + 3 malonyl-CoA + 3 H(+) = 2',4,4',6'-tetrahydroxychalcone + 3 CO2 + 4 CoA. It functions in the pathway secondary metabolite biosynthesis; flavonoid biosynthesis. The primary product of this enzyme is 4,2',4',6'-tetrahydroxychalcone (also termed naringenin-chalcone or chalcone) which can under specific conditions spontaneously isomerize into naringenin. This Oryza sativa subsp. indica (Rice) protein is Chalcone synthase 1 (CHS1).